The sequence spans 546 residues: Sodium/hydrogen exchanger 2 (546 aa).

Over 1–21 the chain is Cytoplasmic; that stretch reads MTMFASLTSKMLSVSTSDHAS. A helical membrane pass occupies residues 22–42; it reads VVSLNLFVALLCACIVIGHLL. Topologically, residues 43-47 are vacuolar; the sequence is EENRW. A helical transmembrane segment spans residues 48 to 68; that stretch reads MNESITALLIGLGTGVVILLI. At 69-75 the chain is on the cytoplasmic side; sequence SRGKNSH. Positions 76 to 96 form an intramembrane region, helical; it reads LLVFSEDLFFIYLLPPIIFNA. Residues 97–111 lie on the Cytoplasmic side of the membrane; it reads GFQVKKKQFFRNFVT. Residues 112–132 form a helical membrane-spanning segment; it reads IMAFGAIGTVVSCTIISLGAI. The Vacuolar segment spans residues 133–148; that stretch reads QFFKKLDIGTFDLGDF. 2 intramembrane regions (helical) span residues 149–168 and 174–194; these read LAIGAIFAATDSVCTLQVLN and LLYSLVFGEGVVNDATSVVLF. Residues 195–218 are Vacuolar-facing; the sequence is NAIQSFDLTHLNHEAAFQFLGNFF. A helical membrane pass occupies residues 219 to 239; it reads YLFLLSTGLGVATGLISAYVI. Over 240-264 the chain is Cytoplasmic; it reads KKLYFGRHSTDREVALMMLMAYLSY. Residues 265–285 traverse the membrane as a helical segment; that stretch reads MLAELFALSGILTVFFCGIVM. Topologically, residues 286–304 are vacuolar; it reads SHYTWHNVTESSRITTKHA. N-linked (GlcNAc...) asparagine glycosylation occurs at asparagine 292. The helical transmembrane segment at 305 to 325 threads the bilayer; sequence FATLSFLAETFIFLYVGMDAL. The Cytoplasmic segment spans residues 326–344; it reads DIEKWRFVSDSPGTSVAVS. The helical transmembrane segment at 345-365 threads the bilayer; that stretch reads SILMGLVMLGRAAFVFPLSFL. Residues 366 to 381 are Vacuolar-facing; that stretch reads SNLAKKHQSEKISIKQ. The helical transmembrane segment at 382–402 threads the bilayer; it reads QVVIWWAGLMRGAVSMALAYN. The Cytoplasmic segment spans residues 403–415; sequence KFTRSGHTELRGN. The chain crosses the membrane as a helical span at residues 416–436; sequence AIMITSTITVCLFSTMVFGML. Residues 437–546 are Vacuolar-facing; it reads TKPLIRYLMP…ERSSHDLSKP (110 aa).

Belongs to the monovalent cation:proton antiporter 1 (CPA1) transporter (TC 2.A.36) family. In terms of tissue distribution, expressed in roots and shoots.

The protein resides in the vacuole membrane. It carries out the reaction Na(+)(in) + H(+)(out) = Na(+)(out) + H(+)(in). The catalysed reaction is K(+)(in) + H(+)(out) = K(+)(out) + H(+)(in). Acts in low affinity electroneutral exchange of protons for cations such as Na(+) or K(+) across membranes. May also exchange Li(+) and Cs(+) with a lower affinity. Involved in vacuolar ion compartmentalization necessary for cell volume regulation and cytoplasmic Na(+) detoxification. This is Sodium/hydrogen exchanger 2 (NHX2) from Arabidopsis thaliana (Mouse-ear cress).